The sequence spans 143 residues: Large ribosomal subunit protein uL11 (143 aa).

It belongs to the universal ribosomal protein uL11 family. As to quaternary structure, part of the ribosomal stalk of the 50S ribosomal subunit. Interacts with L10 and the large rRNA to form the base of the stalk. L10 forms an elongated spine to which L12 dimers bind in a sequential fashion forming a multimeric L10(L12)X complex. Post-translationally, one or more lysine residues are methylated.

Its function is as follows. Forms part of the ribosomal stalk which helps the ribosome interact with GTP-bound translation factors. This is Large ribosomal subunit protein uL11 from Borreliella burgdorferi (strain ATCC 35210 / DSM 4680 / CIP 102532 / B31) (Borrelia burgdorferi).